The primary structure comprises 258 residues: Indole-3-glycerol phosphate synthase (258 aa).

Belongs to the TrpC family.

It carries out the reaction 1-(2-carboxyphenylamino)-1-deoxy-D-ribulose 5-phosphate + H(+) = (1S,2R)-1-C-(indol-3-yl)glycerol 3-phosphate + CO2 + H2O. The protein operates within amino-acid biosynthesis; L-tryptophan biosynthesis; L-tryptophan from chorismate: step 4/5. The protein is Indole-3-glycerol phosphate synthase of Legionella pneumophila (strain Paris).